Reading from the N-terminus, the 131-residue chain is Ponticulin-like protein M (131 aa).

A signal peptide spans 1 to 19 (MKFLSTLILLLSVLALVRG). Ser-106 is lipidated: GPI-like-anchor amidated serine. Positions 107-131 (NSASSPLTTAVLFVVAFAAAIALLL) are cleaved as a propeptide — removed in mature form.

This sequence belongs to the ponticulin family. The GPI-like-anchor contains a phosphoceramide group, rather than a phosphatidyl group.

It localises to the cell membrane. Binds F-actin and nucleates actin assembly. In Dictyostelium discoideum (Social amoeba), this protein is Ponticulin-like protein M (ponM).